Reading from the N-terminus, the 407-residue chain is ETS domain-containing protein Elk-3 (407 aa).

A DNA-binding region (ETS) is located at residues 5–85 (ITLWQFLLQL…IGQKFVYKFV (81 aa)). Lys-92 is covalently cross-linked (Glycyl lysine isopeptide (Lys-Gly) (interchain with G-Cter in SUMO2)). Ser-115 carries the post-translational modification Phosphoserine. Lys-165 is covalently cross-linked (Glycyl lysine isopeptide (Lys-Gly) (interchain with G-Cter in SUMO2)). Disordered regions lie at residues 234–253 (SSASPFSSRSPSLSPNSPLP) and 271–298 (LEPLNLSSGSKTKSPSLPPKAKKPKGLE). Positions 273–277 (PLNLS) match the CTBP-binding motif motif. Residue Ser-396 is modified to Phosphoserine.

Belongs to the ETS family. In terms of assembly, interacts with CTBP1.

Its subcellular location is the nucleus. Functionally, may be a negative regulator of transcription, but can activate transcription when coexpressed with Ras, Src or Mos. Forms a ternary complex with the serum response factor and the ETS and SRF motifs of the Fos serum response element. The sequence is that of ETS domain-containing protein Elk-3 (ELK3) from Homo sapiens (Human).